A 510-amino-acid chain; its full sequence is Maturase K (510 aa).

This sequence belongs to the intron maturase 2 family. MatK subfamily.

It is found in the plastid. The protein localises to the chloroplast. Functionally, usually encoded in the trnK tRNA gene intron. Probably assists in splicing its own and other chloroplast group II introns. This chain is Maturase K, found in Populus trichocarpa (Western balsam poplar).